Reading from the N-terminus, the 227-residue chain is GTP:AMP phosphotransferase AK3, mitochondrial (227 aa).

GTP contacts are provided by G17, G19, K20, G21, and T22. N6-succinyllysine is present on K20. Position 34 is an N6-acetyllysine (K34). S37 bears the Phosphoserine mark. Residues 37 to 66 (SSGDLLRDNMLRGTEIGVLAKAFIDQGKLI) are NMP. AMP is bound by residues S38 and R43. K57 bears the N6-succinyllysine mark. An AMP-binding site is contributed by K64. N6-acetyllysine; alternate occurs at positions 64 and 80. N6-succinyllysine; alternate is present on residues K64 and K80. AMP is bound by residues G91, R94, and Q98. Residues 127-164 (ARWIHPASGRVYNIEFNPPKTVGIDDLTGEPLIQREDD) are LID. 5 residues coordinate GTP: R128, Y138, N139, R161, and R172. 2 positions are modified to N6-acetyllysine; alternate: K174 and K189. Residues K174 and K189 each carry the N6-succinyllysine; alternate modification. GTP is bound at residue T201. N6-acetyllysine is present on K203.

The protein belongs to the adenylate kinase family. AK3 subfamily. Monomer.

It is found in the mitochondrion matrix. The enzyme catalyses a ribonucleoside 5'-triphosphate + AMP = a ribonucleoside 5'-diphosphate + ADP. It carries out the reaction GTP + AMP = GDP + ADP. It catalyses the reaction ITP + AMP = IDP + ADP. Mitochondrial adenylate kinase with a specific GTP:AMP phosphotransferase activity. Could also use ITP as phosphate donor. Its physiological function is to recycle GTP into GDP which is necessary for the TCA cycle in the mitochondrial matrix. In Pongo abelii (Sumatran orangutan), this protein is GTP:AMP phosphotransferase AK3, mitochondrial.